We begin with the raw amino-acid sequence, 698 residues long: Serine/threonine-protein kinase Nek8 (698 aa).

The region spanning 4–258 (YERIRVVGRG…LSHIMAQPLC (255 aa)) is the Protein kinase domain. Residues 10–18 (VGRGAFGIV) and Lys-33 each bind ATP. Asp-128 functions as the Proton acceptor in the catalytic mechanism. Thr-162 is subject to Phosphothreonine; by autocatalysis. The segment at 281 to 307 (LTPGTPMAPGSTGSRATSARCRGVPRG) is disordered. RCC1 repeat units lie at residues 415–466 (RGII…ALSA), 467–518 (DGEL…ILTS), 520–571 (GRVL…TLLC), 585–636 (SGAC…AIGA), and 638–689 (GEVY…LAVR).

This sequence belongs to the protein kinase superfamily. NEK Ser/Thr protein kinase family. NIMA subfamily. Interacts with PKD2; may regulate PKD2 targeting to the cilium. Interacts with ANKS6. Component of a complex containing at least ANKS6, INVS, NEK8 and NPHP3. ANKS6 may organize complex assembly by linking INVS and NPHP3 to NEK8 and INVS may target it to the proximal ciliary axoneme. Interacts with ANKS3. Requires Mg(2+) as cofactor.

The protein localises to the cytoplasm. Its subcellular location is the cytoskeleton. It localises to the cell projection. It is found in the cilium. The protein resides in the cilium axoneme. The protein localises to the microtubule organizing center. Its subcellular location is the centrosome. It catalyses the reaction L-seryl-[protein] + ATP = O-phospho-L-seryl-[protein] + ADP + H(+). It carries out the reaction L-threonyl-[protein] + ATP = O-phospho-L-threonyl-[protein] + ADP + H(+). In terms of biological role, required for renal tubular integrity. May regulate local cytoskeletal structure in kidney tubule epithelial cells. May regulate ciliary biogenesis through targeting of proteins to the cilia. Plays a role in organogenesis and is involved in the regulation of the Hippo signaling pathway. The protein is Serine/threonine-protein kinase Nek8 (Nek8) of Rattus norvegicus (Rat).